The sequence spans 160 residues: Siroheme decarboxylase NirH subunit (160 aa).

It belongs to the Ahb/Nir family. Forms a complex composed of NirDL, NirG and NirH. All proteins are required for the total conversion of siroheme to didecarboxysiroheme.

The catalysed reaction is siroheme + 2 H(+) = 12,18-didecarboxysiroheme + 2 CO2. Its pathway is porphyrin-containing compound metabolism. Involved in heme d1 biosynthesis. Catalyzes the decarboxylation of siroheme into didecarboxysiroheme. Siroheme is probably decarboxylated to monodecarboxysiroheme, which is in turn decarboxylated to didecarboxysiroheme. The sequence is that of Siroheme decarboxylase NirH subunit from Paracoccus pantotrophus (Thiosphaera pantotropha).